Reading from the N-terminus, the 200-residue chain is Probable nicotinate-nucleotide adenylyltransferase (200 aa).

The protein belongs to the NadD family.

It carries out the reaction nicotinate beta-D-ribonucleotide + ATP + H(+) = deamido-NAD(+) + diphosphate. The protein operates within cofactor biosynthesis; NAD(+) biosynthesis; deamido-NAD(+) from nicotinate D-ribonucleotide: step 1/1. In terms of biological role, catalyzes the reversible adenylation of nicotinate mononucleotide (NaMN) to nicotinic acid adenine dinucleotide (NaAD). In Clostridium novyi (strain NT), this protein is Probable nicotinate-nucleotide adenylyltransferase.